The primary structure comprises 385 residues: Flavin-dependent monooxygenase (385 aa).

FAD contacts are provided by residues 12 to 15 (ASIA), 34 to 36 (EKN), 44 to 47 (YAID), arginine 105, tyrosine 267, aspartate 289, and 296 to 302 (PLSGQGT).

This sequence belongs to the aromatic-ring hydroxylase family. Requires FAD as cofactor.

It carries out the reaction 7-chlorotetracycline + NADPH + O2 + H(+) = (1S,10S,10aS)-3-(CONH2)-9-Cl-1-(Me2N)-3,3a,4,10-(HO)4-10-Me-2,5-dioxo-1H,10aH,11H,11aH-cyclopenta[b]anthracen-6-olate + CO + NADP(+) + H2O. The catalysed reaction is a tetracycline + NADPH + O2 + H(+) = a (1S,10aS)-3-(CONH2)-1-(Me2N)-3,3a,4,6-(HO)4-2,5-dioxo-1H,10aH,11H,11aH-cyclopenta[b]anthracene + CO + NADP(+) + H2O. Inhibited by anhydrotetracycline. An FAD-requiring monooxygenase active on tetracycline antibiotic and some of its derivatives, which leads to their inactivation. Expression in E.coli confers high resistance to oxytetracycline, slightly less resistance to tetracycline, moderate resistance to minocycline but no resistance to tigecycline. Degrades tetracycline and oxytetracycline; the reaction requires NADPH. Degrades and confers resistance to chlortetracycline. The polypeptide is Flavin-dependent monooxygenase (Unknown prokaryotic organism).